A 105-amino-acid polypeptide reads, in one-letter code: V-type ATP synthase subunit F (105 aa).

Belongs to the V-ATPase F subunit family.

Functionally, produces ATP from ADP in the presence of a proton gradient across the membrane. The polypeptide is V-type ATP synthase subunit F (Clostridium perfringens (strain 13 / Type A)).